A 536-amino-acid chain; its full sequence is 1,4-beta-D-glucan cellobiohydrolase B (536 aa).

A signal peptide spans 1 to 21 (MSSFQIYRAALLLSILATANA). The catalytic stretch occupies residues 22–458 (QQVGTYTTET…SNIKFGPIGS (437 aa)). The active-site Nucleophile is glutamate 233. Glutamate 238 functions as the Proton donor in the catalytic mechanism. N-linked (GlcNAc...) asparagine glycans are attached at residues asparagine 351 and asparagine 414. The interval 459-500 (TYSSGSSSGSGSSSSSSSTTTKATSTTLKTTSTTSSGSSSTS) is ser/Thr-rich linker. The tract at residues 464–499 (SSSGSGSSSSSSSTTTKATSTTLKTTSTTSSGSSST) is disordered. Residues 500–536 (SAAQAYGQCGGQGWTGPTTCVSGYTCTYENAYYSQCL) form the CBM1 domain. 2 disulfide bridges follow: cysteine 508–cysteine 525 and cysteine 519–cysteine 535.

The protein belongs to the glycosyl hydrolase 7 (cellulase C) family.

It localises to the secreted. The enzyme catalyses Hydrolysis of (1-&gt;4)-beta-D-glucosidic linkages in cellulose and cellotetraose, releasing cellobiose from the non-reducing ends of the chains.. In terms of biological role, the biological conversion of cellulose to glucose generally requires three types of hydrolytic enzymes: (1) Endoglucanases which cut internal beta-1,4-glucosidic bonds; (2) Exocellobiohydrolases that cut the disaccharide cellobiose from the non-reducing end of the cellulose polymer chain; (3) Beta-1,4-glucosidases which hydrolyze the cellobiose and other short cello-oligosaccharides to glucose. In Aspergillus niger, this protein is 1,4-beta-D-glucan cellobiohydrolase B (cbhB).